We begin with the raw amino-acid sequence, 138 residues long: Basic phospholipase A2 homolog acutohaemolysin (138 aa).

The N-terminal stretch at 1-16 (MRALWIVAVLLVGVEG) is a signal peptide. 7 disulfide bridges follow: Cys-42-Cys-131, Cys-44-Cys-60, Cys-59-Cys-111, Cys-65-Cys-138, Cys-66-Cys-104, Cys-73-Cys-97, and Cys-91-Cys-102. An important for membrane-damaging activities in eukaryotes and bacteria; heparin-binding region spans residues 121–133 (KSFRYHLKPSCKK).

In terms of assembly, monomer. In terms of tissue distribution, expressed by the venom gland.

The protein localises to the secreted. Snake venom phospholipase A2 homolog that lacks enzymatic activity. Is myotoxic. Has a strong indirect hemolytic activity and anticoagulant activity. A model of myotoxic mechanism has been proposed: an apo Lys49-PLA2 is activated by the entrance of a hydrophobic molecule (e.g. fatty acid) at the hydrophobic channel of the protein leading to a reorientation of a monomer. This reorientation causes a transition between 'inactive' to 'active' states, causing alignment of C-terminal and membrane-docking sites (MDoS) side-by-side and putting the membrane-disruption sites (MDiS) in the same plane, exposed to solvent and in a symmetric position for both monomers. The MDoS region stabilizes the toxin on membrane by the interaction of charged residues with phospholipid head groups. Subsequently, the MDiS region destabilizes the membrane with penetration of hydrophobic residues. This insertion causes a disorganization of the membrane, allowing an uncontrolled influx of ions (i.e. calcium and sodium), and eventually triggering irreversible intracellular alterations and cell death. This Deinagkistrodon acutus (Hundred-pace snake) protein is Basic phospholipase A2 homolog acutohaemolysin.